The sequence spans 1849 residues: Protein TANC1 (1849 aa).

M1 is subject to N-acetylmethionine. 2 disordered regions span residues 1–47 (MLKA…TTED) and 59–109 (MSLP…FREG). A compositionally biased stretch (basic and acidic residues) spans 8–21 (KSREGVKGSKKEAG). Residues 27 to 46 (ETPTLSSSGDSPVNSLSTTE) are compositionally biased toward polar residues. 6 positions are modified to phosphoserine: S60, S63, S64, S204, S267, and S455. 2 disordered regions span residues 264-309 (DNCS…PRPN) and 430-481 (VASS…QRPR). A compositionally biased stretch (low complexity) spans 451–468 (TPLLSPSSSTSALSAART). ANK repeat units follow at residues 886 to 918 (EGLSAALASLRNLYTPNVKVSRLLILGGANVNY), 924 to 953 (NNAPILCVQSHLGHEEVVTLLLEFGACLDG), 957 to 986 (NGMNALCYAAAAGHMKLVCLLTKKGARVDH), 990 to 1019 (KGQCALVHSALRGHSDILQYLLNCEWSAGP), 1030 to 1059 (ALQQALTAAASMGHSAVVQSLLGMAEEHEI), 1068 to 1097 (WGETALTAAAGRGKLEICELLLERGAAVSR), 1101 to 1130 (RGVPPLFCAARQGHWQVVQLLLDRGCDVNP), 1134 to 1163 (QGRTPLMVAACEGHLSTVEFLLSKGAALSS), 1167 to 1196 (EGLSALSWACLKGHRAVVQYLVEEGAEIDQ), 1200 to 1229 (NGRTPLDLAAFYGDAETVLYLVEKGAVIEH), and 1233 to 1262 (SGMRPLDRAIGCRNTAVVVTLLRKGAKLGN). TPR repeat units lie at residues 1279-1312 (LQKLMEEGNVMYKKGKMKEAAQRYQYALRKFPRE), 1326-1359 (VSLYLNLSRCRRKTNDFGLAEEFASKALELKPKS), and 1361-1393 (EAFYARARAKRNSRQFLAALADLQEAVKLCPTN). Residues 1410–1421 (LQRNQQQKQQAP) show a composition bias toward low complexity. 4 disordered regions span residues 1410–1503 (LQRN…ISKS), 1527–1605 (NQHL…GESG), 1635–1711 (QGGP…PRNT), and 1812–1849 (PHLYPEGVSKQPLHVSTEAHRSHLTSAKPKRSFIESNV). Residues S1429 and S1456 each carry the phosphoserine modification. Residues 1447–1456 (EEAEEEDTSS) are compositionally biased toward acidic residues. Composition is skewed to polar residues over residues 1527-1546 (NQHLGSGQSSMRNSNTKVQV) and 1593-1603 (PSQSLQLQRGE). Over residues 1649–1679 (SLSSSGSSGSPSSSVKMSSSTSSLTSSSSVS) the composition is skewed to low complexity. S1658, S1666, and S1667 each carry phosphoserine.

This sequence belongs to the TANC family. In terms of assembly, interacts probably directly with DLG1, DLG4, HOMER1. Interacts with DLGAP1, INA, CAMK2A, GRIN2B and GRIA1. Interacts with TNIK and MINK1. In terms of processing, phosphorylated; by MINK1 and TNIK upon stimulation by RAP2A. Expressed in heart, lung, liver and kidney. Expressed in brain (at protein level).

It localises to the postsynaptic density. May be a scaffold component in the postsynaptic density. This Rattus norvegicus (Rat) protein is Protein TANC1 (Tanc1).